Here is a 776-residue protein sequence, read N- to C-terminus: Cullin-1 (776 aa).

Arginine 63 bears the Omega-N-methylarginine mark. Positions 706-766 (DRKLLIQAAI…IEKEYLERVD (61 aa)) constitute a Cullin neddylation domain. Residue lysine 720 forms a Glycyl lysine isopeptide (Lys-Gly) (interchain with G-Cter in NEDD8) linkage.

It belongs to the cullin family. In terms of assembly, component of multiple Cul1-RING E3 ubiquitin-protein ligase complexes commonly known as SCF (SKP1-CUL1-F-box) complexes, consisting of CUL1, SKP1, RBX1 and a variable F-box domain-containing protein as substrate-specific subunit. Component of the SCF(FBXW11) complex containing FBXW11. Component of the SCF(SKP2) complex containing SKP2, in which it interacts directly with SKP1, SKP2 and RBX1. Component of the SCF(FBXW2) complex containing FBXW2. Component of the SCF(FBXO32) complex containing FBXO32. Component of the probable SCF(FBXO7) complex containing FBXO7. Component of the SCF(FBXO10) complex containing FBXO10. Component of the SCF(FBXO11) complex containing FBXO11. Component of the SCF(FBXO25) complex containing FBXO25. Component of the SCF(FBXO33) complex containing FBXO33. Component of the probable SCF(FBXO4) complex containing FBXO4. Component of the SCF(FBXO44) complex, composed of SKP1, CUL1 and FBXO44. Component of the SCF(BTRC) complex, composed of SKP1, CUL1 and BTRC. This complex binds phosphorylated NFKBIA. Part of a SCF complex consisting of CUL1, RBX1, SKP1 and FBXO2. Component of a SCF(SKP2)-like complex containing CUL1, SKP1, TRIM21 and SKP2. Component of the SCF(FBXO17) complex, composed of SKP1, CUL1 and FBXO17. Component of the SCF(FBXO27) complex, composed of SKP1, CUL1 and FBXO27. Component of the SCF(CCNF) complex consisting of CUL1, RBX1, SKP1 and CCNF. Interacts with CCNF. Component of the SCF(FBXL3) complex composed of CUL1, SKP1, RBX1 and FBXL3. Component of the SCF(FBXL21) complex composed of CUL1, SKP1, RBX1 and FBXL21. Component of the SCF(FBXO9) composed of CUL1, SKP1, RBX1 and FBXO9. Component of the SCF(FBXW7) composed of CUL1, SKP1, RBX1 and FBXW7. Component of the SCF(FBXO31) complex composed of CUL1, SKP1, RBX1 and FBXO31. Interacts with CHEK2; mediates CHEK2 ubiquitination and regulates its function. Part of a complex with TIP120A/CAND1 and RBX1. The unneddylated form interacts with TIP120A/CAND1 and the interaction mediates the exchange of the F-box substrate-specific subunit. Can self-associate. Interacts with FBXW8. Interacts with RNF7. Interacts with TRIM21. Interacts with COPS2. Interacts with DCUN1D1 and UBE2M. Interacts with DCUN1D3. Interacts with DCUN1D4. Identified in a complex with RBX1 and GLMN. Interacts with CEP68 as part of the SCF(FBXW11) complex; the interaction is probably mediated by FBXW11 and the complex also contains CDK5RAP2 and PCNT. Interacts (when neddylated) with ARIH1; leading to activate the E3 ligase activity of ARIH1. Interacts with COPS9. Interacts with UBXN1. Interacts with KAT7, probably as part of an SCF complex; the interaction mediates KAT7 ubiquitination. Interacts with NOTCH2. Part of a complex that contains DCUN1D5, CUL1 and RBX1; this interaction is bridged by CUL1. Interacts (unneddylated form) with DCUN1D1, DCUN1D2, DCUN1D3, DCUN1D4 and DCUN1D5; these interactions promote the cullin neddylation. Interacts (via the C-terminal domain) with CUL7; the interaction seems to be mediated by FBXW8; it is likely specific to FBXW8, but not other F-box proteins. Interacts with UBR2, as part of SCF(BTRC) complex; the interaction mediates 'Lys-48'-linked ubiquitination of UBR2 and is regulated by DUSP22 in the T-cell receptor signaling pathway. As to quaternary structure, (Microbial infection) Interacts with murine cytomegalovirus M48. In terms of processing, neddylated; which enhances the ubiquitination activity of SCF. Neddylation prevents binding of the inhibitor CAND1. Neddylation leads to structural rearrangment in the complex that allows interaction between the E2 ubiquitin-conjugating enzyme and the acceptor ubiquitin. Deneddylated via its interaction with the COP9 signalosome (CSN) complex. Post-translationally, (Microbial infection) Deneddylated by murine cytomegalovirus M48 leading to a S-phase-like environment that is required for efficient replication of the viral genome. Embryo fibroblasts and embryo preadipocytes.

The protein operates within protein modification; protein ubiquitination. Core component of multiple cullin-RING-based SCF (SKP1-CUL1-F-box protein) E3 ubiquitin-protein ligase complexes, which mediate the ubiquitination of proteins involved in cell cycle progression, signal transduction and transcription. SCF complexes and ARIH1 collaborate in tandem to mediate ubiquitination of target proteins. In the SCF complex, serves as a rigid scaffold that organizes the SKP1-F-box protein and RBX1 subunits. May contribute to catalysis through positioning of the substrate and the ubiquitin-conjugating enzyme. The E3 ubiquitin-protein ligase activity of the complex is dependent on the neddylation of the cullin subunit and exchange of the substrate recognition component is mediated by TIP120A/CAND1. The functional specificity of the SCF complex depends on the F-box protein as substrate recognition component. SCF(BTRC) and SCF(FBXW11) direct ubiquitination of CTNNB1 and participate in Wnt signaling. SCF(FBXW11) directs ubiquitination of phosphorylated NFKBIA. SCF(BTRC) directs ubiquitination of NFKBIB, NFKBIE, ATF4, SMAD3, SMAD4, CDC25A, FBXO5 and probably NFKB2. SCF(BTRC) and/or SCF(FBXW11) direct ubiquitination of CEP68. SCF(SKP2) directs ubiquitination of phosphorylated CDKN1B/p27kip and is involved in regulation of G1/S transition. SCF(SKP2) directs ubiquitination of ORC1, CDT1, RBL2, ELF4, CDKN1A, RAG2, FOXO1A, and probably MYC and TAL1. SCF(FBXW7) directs ubiquitination of cyclin E, NOTCH1 released notch intracellular domain (NICD), and probably PSEN1. SCF(FBXW2) directs ubiquitination of GCM1. SCF(FBXO32) directs ubiquitination of MYOD1. SCF(FBXO7) directs ubiquitination of BIRC2 and DLGAP5. SCF(FBXO33) directs ubiquitination of YBX1. SCF(FBXO1) directs ubiquitination of BCL6 and DTL but does not seem to direct ubiquitination of TP53. SCF(BTRC) mediates the ubiquitination of NFKBIA at 'Lys-21' and 'Lys-22'; the degradation frees the associated NFKB1-RELA dimer to translocate into the nucleus and to activate transcription. SCF(CCNF) directs ubiquitination of CCP110. SCF(FBXL3) and SCF(FBXL21) direct ubiquitination of CRY1 and CRY2. SCF(FBXO9) directs ubiquitination of TTI1 and TELO2. SCF(FBXO10) directs ubiquitination of BCL2. Neddylated CUL1-RBX1 ubiquitinates p53/TP53 recruited by Cul7-RING(FBXW8) complex. SCF(BTRC) directs 'Lys-48'-linked ubiquitination of UBR2 in the T-cell receptor signaling pathway. The SCF(FBXO31) protein ligase complex specifically mediates the ubiquitination of proteins amidated at their C-terminus in response to oxidative stress. The polypeptide is Cullin-1 (Cul1) (Mus musculus (Mouse)).